Consider the following 51-residue polypeptide: Putative ribosomal protein eL39-like 5 (51 aa).

Belongs to the eukaryotic ribosomal protein eL39 family.

The protein is Putative ribosomal protein eL39-like 5 (RPL39P5) of Homo sapiens (Human).